A 156-amino-acid chain; its full sequence is Ribosomal RNA large subunit methyltransferase H (156 aa).

S-adenosyl-L-methionine is bound by residues Leu-73, Gly-104, and 123-128 (LSSLTL).

It belongs to the RNA methyltransferase RlmH family. Homodimer.

Its subcellular location is the cytoplasm. The catalysed reaction is pseudouridine(1915) in 23S rRNA + S-adenosyl-L-methionine = N(3)-methylpseudouridine(1915) in 23S rRNA + S-adenosyl-L-homocysteine + H(+). Specifically methylates the pseudouridine at position 1915 (m3Psi1915) in 23S rRNA. The chain is Ribosomal RNA large subunit methyltransferase H from Bordetella bronchiseptica (strain ATCC BAA-588 / NCTC 13252 / RB50) (Alcaligenes bronchisepticus).